Reading from the N-terminus, the 223-residue chain is N-terminal Xaa-Pro-Lys N-methyltransferase 1 (223 aa).

Met1 is subject to N-acetylmethionine. Position 2 is an N-acetylthreonine; in N-terminal Xaa-Pro-Lys N-methyltransferase 1, N-terminally processed (Thr2). S-adenosyl-L-methionine-binding positions include Gly69, Arg74, 91–93 (DVT), 119–120 (LQ), and Gln135.

This sequence belongs to the methyltransferase superfamily. NTM1 family.

The protein resides in the nucleus. The catalysed reaction is N-terminal L-alanyl-L-prolyl-L-lysyl-[protein] + 3 S-adenosyl-L-methionine = N-terminal N,N,N-trimethyl-L-alanyl-L-prolyl-L-lysyl-[protein] + 3 S-adenosyl-L-homocysteine + 3 H(+). It catalyses the reaction N-terminal L-seryl-L-prolyl-L-lysyl-[protein] + 3 S-adenosyl-L-methionine = N-terminal N,N,N-trimethyl-L-seryl-L-prolyl-L-lysyl-[protein] + 3 S-adenosyl-L-homocysteine + 3 H(+). It carries out the reaction N-terminal L-prolyl-L-prolyl-L-lysyl-[protein] + 2 S-adenosyl-L-methionine = N-terminal N,N-dimethyl-L-prolyl-L-prolyl-L-lysyl-[protein] + 2 S-adenosyl-L-homocysteine + 2 H(+). Distributive alpha-N-methyltransferase that methylates the N-terminus of target proteins containing the N-terminal motif [Ala/Gly/Pro/Ser]-Pro-Lys when the initiator Met is cleaved. Specifically catalyzes mono-, di- or tri-methylation of the exposed alpha-amino group of the Ala, Gly or Ser residue in the [Ala/Gly/Ser]-Pro-Lys motif and mono- or di-methylation of Pro in the Pro-Pro-Lys motif. Some of the substrates may be primed by NTMT2-mediated monomethylation. Catalyzes the trimethylation of the N-terminal Gly in CENPA (after removal of Met-1). Responsible for the N-terminal methylation of KLHL31, MYL2, MYL3, RB1, RCC1, RPL23A and SET. Required during mitosis for normal bipolar spindle formation and chromosome segregation via its action on RCC1. The protein is N-terminal Xaa-Pro-Lys N-methyltransferase 1 (Ntmt1) of Rattus norvegicus (Rat).